Consider the following 519-residue polypeptide: MHSAILILDFGSQYARLIARRIRETSVYCELHPFDVSPQFIREFSPVGIILSGGPASIFTNDAPRVPQIVFELGVPVLGICYGMQAMAAQLGGEVENAQTREFGYAELLTEPCRLFQDIKDRINSDGKPALDVWMSHGDRVNKLPPGFTAIAFNAATPFAAMADETRRFYGVQFHPEVTHTLQGKAILDRFVHDICDAGYDWNMPDYVEEAIGRIRARVGGDKVILGLSGGVDSSVAAALIHRAIGDQLVCVFVDNGLLRLNEAKQTMETFSRNLAVNVIYVDASRQFLEQLKGITDPEQKRRTIGREFVEIFQQEAAKIENVKWLAQGTIYPDVIESAGSHTKKSGLIKSHHNVGGLPETLRLKLLEPLRELFKDEVRELGLALGLPRDLVFRHPFPGPGLGVRILGEVKYEYTELLRQADAIFIEELRNAGWYEKTSQAFAVFLPIKSVGVMGDNRSYEYVIALRAVQTEDFMTAQWAELPYTLLARISNRIINEIRGINRVVYDISGKPPATIEWE.

The Glutamine amidotransferase type-1 domain occupies 4–201 (AILILDFGSQ…VHDICDAGYD (198 aa)). Residue cysteine 81 is the Nucleophile of the active site. Catalysis depends on residues histidine 175 and glutamate 177. The GMPS ATP-PPase domain maps to 202 to 394 (WNMPDYVEEA…LGLPRDLVFR (193 aa)). Position 229-235 (229-235 (SGGVDSS)) interacts with ATP.

In terms of assembly, homodimer.

The catalysed reaction is XMP + L-glutamine + ATP + H2O = GMP + L-glutamate + AMP + diphosphate + 2 H(+). Its pathway is purine metabolism; GMP biosynthesis; GMP from XMP (L-Gln route): step 1/1. Catalyzes the synthesis of GMP from XMP. The polypeptide is GMP synthase [glutamine-hydrolyzing] (Nitrosomonas eutropha (strain DSM 101675 / C91 / Nm57)).